A 954-amino-acid chain; its full sequence is E3 ubiquitin-protein ligase MIB2 (954 aa).

Positions 1 to 80 (MDLDPYASMQ…AYDLLLYDNA (80 aa)) constitute an MIB/HERC2 1 domain. The segment at 86-138 (HPNIICDCCKKHGIRGMRWKCKMCFDYDLCTQCYMNNKHDLSHAFERYETAHS) adopts a ZZ-type zinc-finger fold. Positions 91, 94, 106, 109, 115, 118, 124, and 128 each coordinate Zn(2+). The MIB/HERC2 2 domain maps to 149-227 (LTRITLKGTF…KVDLKCTVEA (79 aa)). ANK repeat units lie at residues 464-493 (QGRT…TVNL), 497-526 (EGDT…GADL), 530-559 (AKCT…DVNL), 563-591 (HGDT…NIDF), 597-626 (QGFN…QLVD), 631-661 (DGFT…DVNV), 665-694 (RNQT…DVNA), 698-726 (DGDT…EMGS), and 766-795 (RGKS…EQQV). 2 consecutive RING-type zinc fingers follow at residues 830 to 865 (CLVC…IKCQ) and 910 to 943 (CPIC…PICR).

The protein localises to the cytoplasm. The enzyme catalyses S-ubiquitinyl-[E2 ubiquitin-conjugating enzyme]-L-cysteine + [acceptor protein]-L-lysine = [E2 ubiquitin-conjugating enzyme]-L-cysteine + N(6)-ubiquitinyl-[acceptor protein]-L-lysine.. Its pathway is protein modification; protein ubiquitination. Functionally, E3 ubiquitin-protein ligase that mediates ubiquitination of Delta receptors, which act as ligands of Notch proteins. Positively regulates the Delta-mediated Notch signaling by ubiquitinating the intracellular domain of Delta, leading to endocytosis of Delta receptors. The polypeptide is E3 ubiquitin-protein ligase MIB2 (MIB2) (Gallus gallus (Chicken)).